The sequence spans 65 residues: Chymotrypsin/elastase isoinhibitors 2 to 5 (65 aa).

Cystine bridges form between cysteine 4–cysteine 37, cysteine 13–cysteine 32, cysteine 16–cysteine 28, cysteine 20–cysteine 59, and cysteine 39–cysteine 53. Residues 4–59 (CGKNEVWTECTGCELKCGQDEKTPCALMCRPPSCECTPGRGMRRTHDGKCVPVSEC) form the TIL domain.

It belongs to the serine protease inhibitor-like (TIL domain-containing) family.

It localises to the secreted. Its function is as follows. Defends the organism against the host's proteinases. This is Chymotrypsin/elastase isoinhibitors 2 to 5 from Ascaris suum (Pig roundworm).